The sequence spans 292 residues: 4-hydroxybenzoate octaprenyltransferase (292 aa).

The next 8 membrane-spanning stretches (helical) occupy residues 20 to 40 (IGILLLLWPTLWGLWLAADGM), 43 to 63 (PMILVIFILGTILMRSAGCAI), 94 to 114 (LLIAAGLSLCAFLLILPLNLL), 135 to 155 (FFAMPQAYLGIAFSFGIPMAF), 160 to 180 (GTVPPLAWLLVLANLFWVIAY), 209 to 229 (VAGILLCHIIFLSTLTYAGIL), 234 to 254 (IWFYGALLVALGLVIVQYGMI), and 266 to 286 (FLHNNWIGAVIFAGILLDTLF).

This sequence belongs to the UbiA prenyltransferase family. Requires Mg(2+) as cofactor.

Its subcellular location is the cell inner membrane. The catalysed reaction is all-trans-octaprenyl diphosphate + 4-hydroxybenzoate = 4-hydroxy-3-(all-trans-octaprenyl)benzoate + diphosphate. The protein operates within cofactor biosynthesis; ubiquinone biosynthesis. Functionally, catalyzes the prenylation of para-hydroxybenzoate (PHB) with an all-trans polyprenyl group. Mediates the second step in the final reaction sequence of ubiquinone-8 (UQ-8) biosynthesis, which is the condensation of the polyisoprenoid side chain with PHB, generating the first membrane-bound Q intermediate 3-octaprenyl-4-hydroxybenzoate. The protein is 4-hydroxybenzoate octaprenyltransferase of Nitrosomonas europaea (strain ATCC 19718 / CIP 103999 / KCTC 2705 / NBRC 14298).